The chain runs to 239 residues: Orotidine 5'-phosphate decarboxylase (239 aa).

Substrate is bound by residues D11, K33, 60–69 (DLKFHDIPTT), T117, R178, Q187, G207, and R208. K62 (proton donor) is an active-site residue.

It belongs to the OMP decarboxylase family. Type 1 subfamily. In terms of assembly, homodimer.

It carries out the reaction orotidine 5'-phosphate + H(+) = UMP + CO2. The protein operates within pyrimidine metabolism; UMP biosynthesis via de novo pathway; UMP from orotate: step 2/2. In terms of biological role, catalyzes the decarboxylation of orotidine 5'-monophosphate (OMP) to uridine 5'-monophosphate (UMP). This Nitrosospira multiformis (strain ATCC 25196 / NCIMB 11849 / C 71) protein is Orotidine 5'-phosphate decarboxylase.